Here is a 261-residue protein sequence, read N- to C-terminus: Phosphoadenosine phosphosulfate reductase (261 aa).

This sequence belongs to the PAPS reductase family. CysH subfamily.

It catalyses the reaction [thioredoxin]-disulfide + sulfite + adenosine 3',5'-bisphosphate + 2 H(+) = [thioredoxin]-dithiol + 3'-phosphoadenylyl sulfate. It participates in sulfur metabolism; hydrogen sulfide biosynthesis; sulfite from sulfate: step 3/3. In terms of biological role, the NADP dependent reduction of PAPS into sulfite involves thioredoxin which probably plays the role of a thiol carrier. This chain is Phosphoadenosine phosphosulfate reductase (MET16), found in Saccharomyces cerevisiae (strain ATCC 204508 / S288c) (Baker's yeast).